Consider the following 257-residue polypeptide: Acetylglutamate kinase (257 aa).

Substrate is bound by residues 43 to 44, arginine 65, and asparagine 157; that span reads GG. ATP-binding positions include 180–185 and 208–210; these read DVSGIL and IIT.

This sequence belongs to the acetylglutamate kinase family. ArgB subfamily. Homodimer.

The protein localises to the cytoplasm. It carries out the reaction N-acetyl-L-glutamate + ATP = N-acetyl-L-glutamyl 5-phosphate + ADP. It functions in the pathway amino-acid biosynthesis; L-arginine biosynthesis; N(2)-acetyl-L-ornithine from L-glutamate: step 2/4. In terms of biological role, catalyzes the ATP-dependent phosphorylation of N-acetyl-L-glutamate. The polypeptide is Acetylglutamate kinase (Proteus mirabilis (strain HI4320)).